A 329-amino-acid polypeptide reads, in one-letter code: Ornithine carbamoyltransferase (329 aa).

Residues 51–54, glutamine 78, arginine 102, and 129–132 each bind carbamoyl phosphate; these read STRT and HPVQ. Residues asparagine 174, aspartate 238, and 242-243 each bind L-ornithine; that span reads SM. Carbamoyl phosphate-binding positions include 278–279 and arginine 306; that span reads CL.

Belongs to the aspartate/ornithine carbamoyltransferase superfamily. OTCase family.

It localises to the cytoplasm. It catalyses the reaction carbamoyl phosphate + L-ornithine = L-citrulline + phosphate + H(+). Its pathway is amino-acid biosynthesis; L-arginine biosynthesis; L-arginine from L-ornithine and carbamoyl phosphate: step 1/3. Its function is as follows. Reversibly catalyzes the transfer of the carbamoyl group from carbamoyl phosphate (CP) to the N(epsilon) atom of ornithine (ORN) to produce L-citrulline. This chain is Ornithine carbamoyltransferase, found in Helicobacter hepaticus (strain ATCC 51449 / 3B1).